We begin with the raw amino-acid sequence, 144 residues long: Transmembrane protein 170A (144 aa).

Topologically, residues 1-50 (MEREGSGGGGGSAGLLQQILSLKLVPRVGNGTLCPNSTSLCSFPEMWYGV) are extracellular. 2 N-linked (GlcNAc...) asparagine glycosylation sites follow: Asn-30 and Asn-36. The chain crosses the membrane as a helical span at residues 51–71 (FLWALMSSVFFHVPAGLLALF). Topologically, residues 72-85 (TLRHHKYGRFMSVS) are cytoplasmic. The chain crosses the membrane as a helical span at residues 86 to 106 (ILLMGIVGPITAGILTSAAIA). Residues 107-116 (GVYRAAGKEM) are Extracellular-facing. Residues 117-137 (IPFEALTLGTGQTFCVVVVSF) form a helical membrane-spanning segment. Residues 138-144 (LRVLATL) are Cytoplasmic-facing.

This sequence belongs to the TMEM170 family. In terms of assembly, interacts with RTN4.

The protein localises to the endoplasmic reticulum membrane. Its subcellular location is the nucleus envelope. Its function is as follows. Acts as a regulator of endoplasmic reticulum (ER) and nuclear envelope (NE) morphogenesis. Affects the ratio between tubular ER and ER sheets by promoting sheet formation at the expense of tubules. Influences NE expansion, nuclear pore complex formation and proper localization of inner nuclear membrane proteins. The polypeptide is Transmembrane protein 170A (Tmem170a) (Mus musculus (Mouse)).